A 275-amino-acid chain; its full sequence is Formamidopyrimidine-DNA glycosylase (275 aa).

Pro2 acts as the Schiff-base intermediate with DNA in catalysis. Catalysis depends on Glu3, which acts as the Proton donor. Lys58 acts as the Proton donor; for beta-elimination activity in catalysis. DNA is bound by residues His91 and Arg110. An FPG-type zinc finger spans residues 238–272; the sequence is QVYGQTGKPCPRCGQAIVKLKVGGRGTHICPKCQK. The Proton donor; for delta-elimination activity role is filled by Arg262.

This sequence belongs to the FPG family. In terms of assembly, monomer. It depends on Zn(2+) as a cofactor.

The enzyme catalyses Hydrolysis of DNA containing ring-opened 7-methylguanine residues, releasing 2,6-diamino-4-hydroxy-5-(N-methyl)formamidopyrimidine.. It catalyses the reaction 2'-deoxyribonucleotide-(2'-deoxyribose 5'-phosphate)-2'-deoxyribonucleotide-DNA = a 3'-end 2'-deoxyribonucleotide-(2,3-dehydro-2,3-deoxyribose 5'-phosphate)-DNA + a 5'-end 5'-phospho-2'-deoxyribonucleoside-DNA + H(+). In terms of biological role, involved in base excision repair of DNA damaged by oxidation or by mutagenic agents. Acts as a DNA glycosylase that recognizes and removes damaged bases. Has a preference for oxidized purines, such as 7,8-dihydro-8-oxoguanine (8-oxoG). Has AP (apurinic/apyrimidinic) lyase activity and introduces nicks in the DNA strand. Cleaves the DNA backbone by beta-delta elimination to generate a single-strand break at the site of the removed base with both 3'- and 5'-phosphates. This is Formamidopyrimidine-DNA glycosylase from Streptococcus pyogenes serotype M28 (strain MGAS6180).